We begin with the raw amino-acid sequence, 938 residues long: TFIIH basal transcription factor complex helicase/translocase XPB subunit (938 aa).

Residues 394-562 enclose the Helicase ATP-binding domain; it reads FRSGNKAHQG…DLRHLVGPKL (169 aa). 407–414 contributes to the ATP binding site; sequence LPCGAGKT. A DEVH box motif is present at residues 515-518; it reads DEVH. Positions 627–781 constitute a Helicase C-terminal domain; that stretch reads WCTQALLEFH…SYRVLQSDMV (155 aa).

The protein belongs to the helicase family. RAD25/XPB subfamily. As to quaternary structure, component of the 7-subunit TFIIH core complex composed of XPB, XPD, SSL1, TFB1, TFB2, TFB4 and TFB5.

It catalyses the reaction Couples ATP hydrolysis with the unwinding of duplex DNA by translocating in the 3'-5' direction.. It carries out the reaction ATP + H2O = ADP + phosphate + H(+). ATP-dependent 3'-5' DNA helicase/translocase; binds dsDNA rather than ssDNA, unzipping it in a translocase rather than classical helicase activity. Component of the general transcription factor IIH (TFIIH) core complex, involved in spliced leader RNA (SL RNA) gene transcription by RNA polymerase II. TFIIH has an essential role in transcription initiation. When the pre-initiation complex (PIC) has been established, TFIIH is required for promoter opening and promoter escape. The ATPase activity of XPB is required for promoter opening and promoter escape. In Trypanosoma brucei brucei (strain 927/4 GUTat10.1), this protein is TFIIH basal transcription factor complex helicase/translocase XPB subunit.